We begin with the raw amino-acid sequence, 486 residues long: MTTFYTVISWLSVFGYWLLIAGVTLRILMKRRAVPSAMAWLLIIYILPLVGIIAYLSFGELHLGKRRAERAKAMWPSTARWLSELKECQHIFANSNSEVASPLFQLCERRQGINGVKGNQLQLLTTTDDTLKALVRDIELARHNIEMVFYIWQPGGLVDQVAESLMAAARRGVHCRLLLDSAGSKQFFRSPYPAMMRNAGIEVVEALKVNVFRMFLRRMDLRQHRKIVLIDNYVAYTGSMNMVDPRFFKQDAGVGQWIDMMARMEGPVATTLGIVYACDWEIETGKRILPPPPDANIMPFEEETGHTIQVIASGPGFPEEMIHQALLTAVYAAREQLIMTTPYFVPSDDLLHAICTAAQRGVDVSIIVPRENDSMMVRWASRAFFTELLNAGVKIYQFEGGLLHSKSVLVDGQLSLVGTVNLDMRSLWLNFEITLVIDDDGFGADLAQVQDDYIARSALLDGELWNKRPLWHRVTERLFYFFSPLL.

2 consecutive transmembrane segments (helical) span residues 3-23 and 38-58; these read TFYT…IAGV and MAWL…YLSF. PLD phosphodiesterase domains are found at residues 219–246 and 399–426; these read MDLR…VDPR and EGGL…DMRS. Active-site residues include H224, K226, D231, H404, K406, and D411.

This sequence belongs to the phospholipase D family. Cardiolipin synthase subfamily. ClsA sub-subfamily.

It localises to the cell inner membrane. The catalysed reaction is 2 a 1,2-diacyl-sn-glycero-3-phospho-(1'-sn-glycerol) = a cardiolipin + glycerol. Catalyzes the reversible phosphatidyl group transfer from one phosphatidylglycerol molecule to another to form cardiolipin (CL) (diphosphatidylglycerol) and glycerol. This Yersinia pseudotuberculosis serotype O:3 (strain YPIII) protein is Cardiolipin synthase A.